Here is a 528-residue protein sequence, read N- to C-terminus: Protein arginine N-methyltransferase 3 (528 aa).

The segment at 1–42 (MCSLAAGNGQGAELGPEPLELSDSGDDAGWEDEDADAEPAQG) is disordered. C2 bears the N-acetylcysteine mark. Phosphoserine is present on residues S22 and S24. Over residues 23–37 (DSGDDAGWEDEDADA) the composition is skewed to acidic residues. Residues 46–69 (TPCLFCDRLFRSAEETFSHCKLEH) form a C2H2-type zinc finger. S169 is subject to Phosphoserine. The segment at 184–528 (MKQFAQDFVM…NSSTQTYSLQ (345 aa)) is mediates interaction with ALDH1A1. An SAM-dependent MTase PRMT-type domain is found at 214–528 (DGVYFSSYGH…NSSTQTYSLQ (315 aa)). S-adenosyl-L-homocysteine is bound by residues R236, G260, D282, S284, I310, and E311. Catalysis depends on residues E326 and E335.

The protein belongs to the class I-like SAM-binding methyltransferase superfamily. Protein arginine N-methyltransferase family. In terms of assembly, monomer and homodimer. Interacts with EPB41L3 (via FERM domain); the interaction is direct and inhibits the protein-arginine N-methyltransferase activity of PRMT3. Interacts with the 40S ribosomal protein RPS2. Interacts with ALDH1A1; the interaction is direct, inhibits ALDH1A1 aldehyde dehydrogenase activity and is independent of the methyltransferase activity of PRMT3. In terms of tissue distribution, ubiquitously expressed.

The protein resides in the cytoplasm. Its subcellular location is the cytosol. It localises to the nucleus. The enzyme catalyses L-arginyl-[protein] + S-adenosyl-L-methionine = N(omega)-methyl-L-arginyl-[protein] + S-adenosyl-L-homocysteine + H(+). It catalyses the reaction L-arginyl-[protein] + 2 S-adenosyl-L-methionine = N(omega),N(omega)-dimethyl-L-arginyl-[protein] + 2 S-adenosyl-L-homocysteine + 2 H(+). With respect to regulation, inhibited by N-ethylmaleimide and high concentrations of zinc chloride. Functionally, protein-arginine N-methyltransferase that catalyzes both the monomethylation and asymmetric dimethylation of the guanidino nitrogens of arginine residues in target proteins, and therefore falls into the group of type I methyltransferases. Catalyzes the asymmetric arginine dimethylation at multiple sites in the Arg/Gly-rich region of small ribosomal subunit protein uS5/RPS2. Also appears to methylate other ribosomal proteins. May regulate retinoic acid synthesis and signaling by inhibiting ALDH1A1 retinal dehydrogenase activity. Contributes to methylation of histone H4 'Arg-3', a specific tag for epigenetic transcriptional activation. Promotes osteogenesis. The chain is Protein arginine N-methyltransferase 3 from Rattus norvegicus (Rat).